A 264-amino-acid chain; its full sequence is MLELRLVQGSLLKKVLESIKDLVNDANFDCSATGFSLQAMDSSHVALVALLLRSEGFEHYRCDRNISMGMNLANMAKMLKCAGNDDIITLKADDGSDTVTFMFESPTQDKIADFEMKLMDIDSEHLGIPEAEYHAIVRMPSAEFSRICKDLSSIGDTVVISVTKEGVKFSTRGDIGTANIVCRQNTTVDKPEEATVIEMNEPVSLTFALRYLNSFTKATPLSNTVTISLSSELPVVVEYKIAEMGYIRFYLAPKIEEDEEETKP.

A DNA-binding region spans residues 61 to 80 (RCDRNISMGMNLANMAKMLK).

The protein belongs to the PCNA family.

The protein resides in the nucleus. This protein is an auxiliary protein of DNA polymerase delta and is involved in the control of eukaryotic DNA replication by increasing the polymerase's processibility during elongation of the leading strand. This Nicotiana tabacum (Common tobacco) protein is Proliferating cell nuclear antigen (PCNA).